We begin with the raw amino-acid sequence, 172 residues long: MLDAFAKVVAQADARGEFLSNTQLDALSSMVAEGNKRLDVVNKINSNASAIVTNSARALFAEQPQLIQPGGNAYTSRRMAACLRDMEIVLRYVSYAMIAGDSSVLDDRCLNGLRETYQALGTPGSSVSVAVQKMKEASVALANDLTGITQGDCSALIAELGSYFDRAAVSVV.

At N72 the chain carries N4-methylasparagine. Residues C82 and C153 each coordinate (2R,3E)-phycocyanobilin.

Belongs to the phycobiliprotein family. Heterodimer of an alpha and a beta subunit, which further assembles into trimers and the trimers into hexamers. The basic functional unit of phycobiliproteins is a ring-shaped hexamer formed from two back-to-back trimers contacting via the alpha chain subunits. The trimers are composed of alpha/beta subunit heterodimers arranged around a three-fold axis of symmetry. The phycoerythrins also contain a gamma subunit which is located in the center of the hexamer. Post-translationally, contains two covalently linked bilin chromophores.

The protein resides in the plastid. The protein localises to the chloroplast thylakoid membrane. Its function is as follows. Light-harvesting photosynthetic bile pigment-protein from the phycobiliprotein complex (phycobilisome, PBS). Phycocyanin is the major phycobiliprotein in the PBS rod. The sequence is that of C-phycocyanin beta chain (cpcB) from Pyropia yezoensis (Susabi-nori).